The following is a 354-amino-acid chain: Uroporphyrinogen decarboxylase (354 aa).

Substrate-binding positions include 27–31, Asp77, Tyr153, Thr208, and His326; that span reads RQAGR.

This sequence belongs to the uroporphyrinogen decarboxylase family. In terms of assembly, homodimer.

Its subcellular location is the cytoplasm. The catalysed reaction is uroporphyrinogen III + 4 H(+) = coproporphyrinogen III + 4 CO2. It functions in the pathway porphyrin-containing compound metabolism; protoporphyrin-IX biosynthesis; coproporphyrinogen-III from 5-aminolevulinate: step 4/4. Catalyzes the decarboxylation of four acetate groups of uroporphyrinogen-III to yield coproporphyrinogen-III. In Neisseria gonorrhoeae (strain ATCC 700825 / FA 1090), this protein is Uroporphyrinogen decarboxylase.